The following is a 473-amino-acid chain: H(+)/Cl(-) exchange transporter ClcA (473 aa).

The Cytoplasmic portion of the chain corresponds to 1–32; it reads MKTDTSTFLAQQIVRLRRRDQIRRLMQRDKTP. The helical transmembrane segment at 33–69 threads the bilayer; the sequence is LAILFMAAVVGTLTGLVGVAFEKAVSWVQNMRIGALV. The Periplasmic portion of the chain corresponds to 70–76; sequence QVADHAF. A helical transmembrane segment spans residues 77–100; that stretch reads LLWPLAFILSALLAMVGYFLVRKF. Positions 106-110 match the Selectivity filter part_1 motif; sequence GSGIP. Residue S107 participates in chloride binding. An intramembrane region (helical) is located at residues 109–116; it reads IPEIEGAL. The Cytoplasmic portion of the chain corresponds to 117 to 123; sequence EELRPVR. A run of 2 helical transmembrane segments spans residues 124 to 141 and 148 to 166; these read WWRVLPVKFIGGMGTLGA and EGPTVQIGGNLGRMVLDVF. Positions 146-150 match the Selectivity filter part_2 motif; sequence GREGP. The Cytoplasmic segment spans residues 167–176; that stretch reads RMRSAEARHT. Intramembrane regions (helical) lie at residues 177–189 and 193–201; these read LLATGAAAGLSAA and PLAGILFII. The Cytoplasmic portion of the chain corresponds to 202–214; that stretch reads EEMRPQFRYNLIS. A helical transmembrane segment spans residues 215–232; the sequence is IKAVFTGVIMSSIVFRIF. At 233 to 252 the chain is on the periplasmic side; the sequence is NGEAPIIEVGKLSDAPVNTL. The chain crosses the membrane as a helical span at residues 253–281; the sequence is WLYLILGIIFGCVGPVFNSLVLRTQDMFQ. Residues 282–287 are Cytoplasmic-facing; that stretch reads RFHGGE. A helical membrane pass occupies residues 288-309; it reads IKKWVLMGGAIGGLCGILGLIE. The Periplasmic portion of the chain corresponds to 310–329; that stretch reads PEAAGGGFNLIPIAAAGNFS. 2 helical membrane-spanning segments follow: residues 330–349 and 355–376; these read VGLLLFIFIARVVTTLLCFS and GIFAPMLALGTLLGTAFGMAAA. Positions 355-359 match the Selectivity filter part_3 motif; the sequence is GIFAP. Positions 356 and 357 each coordinate chloride. The Periplasmic portion of the chain corresponds to 377-386; that stretch reads VLFPQYHLEA. An intramembrane region (helical) is located at residues 387–401; sequence GTFAIAGMGALMAAS. The note=Loop between two helices intramembrane region spans 402–404; the sequence is VRA. Positions 405–416 form an intramembrane region, helical; that stretch reads PLTGIVLVLEMT. An intramembrane region (note=Loop between two helices) is located at residues 417–421; that stretch reads DNYQL. The helical transmembrane segment at 422-438 threads the bilayer; the sequence is ILPMIITCLGATLLAQF. Residues 439 to 473 are Cytoplasmic-facing; the sequence is LGGKPLYSTILARTLAKQDAEQAAKSQNAPAGENT. Y445 is a binding site for chloride.

This sequence belongs to the chloride channel (TC 2.A.49) family. ClcA subfamily. Homodimer.

It localises to the cell inner membrane. It carries out the reaction 2 chloride(in) + H(+)(out) = 2 chloride(out) + H(+)(in). Its function is as follows. Proton-coupled chloride transporter. Functions as antiport system and exchanges two chloride ions for 1 proton. Probably acts as an electrical shunt for an outwardly-directed proton pump that is linked to amino acid decarboxylation, as part of the extreme acid resistance (XAR) response. This Salmonella gallinarum (strain 287/91 / NCTC 13346) protein is H(+)/Cl(-) exchange transporter ClcA.